A 307-amino-acid polypeptide reads, in one-letter code: MTKPRHYLQFKDFTRDDYRHVFDRTRWIKDKFKRYEPYHPLFDRTLVMIFEKASTRTRLSFEAGMQQLGGSAIYLNTRDSQLGRGEPVEDAAQVISRMSDVVMIRTFEQDIIERFAAHSRVPVINGLTNEYHPCQILADIYTFIEHRGSIQGRTVAWVGDSNNMCNTWLQAAELLDFNVHVSTPPGYEVEPERAGLYGTGHFEQFADPMEACKGADLVTTDVWTSMGFEAENDERMKDFADWCVDAEMMAAARADAVFMHCLPAHRGEEVTADVIDGAQSVVWDEAENRLHVQKALMEYLVLGKVED.

Residues 54–57 (STRT), Gln-81, Arg-105, and 132–135 (HPCQ) contribute to the carbamoyl phosphate site. L-ornithine is bound by residues Asn-163, Asp-221, and 225–226 (SM). Residues 261–262 (CL) and Arg-289 contribute to the carbamoyl phosphate site.

Belongs to the aspartate/ornithine carbamoyltransferase superfamily. OTCase family.

It localises to the cytoplasm. It catalyses the reaction carbamoyl phosphate + L-ornithine = L-citrulline + phosphate + H(+). The protein operates within amino-acid biosynthesis; L-arginine biosynthesis; L-arginine from L-ornithine and carbamoyl phosphate: step 1/3. Its function is as follows. Reversibly catalyzes the transfer of the carbamoyl group from carbamoyl phosphate (CP) to the N(epsilon) atom of ornithine (ORN) to produce L-citrulline. The protein is Ornithine carbamoyltransferase of Aromatoleum aromaticum (strain DSM 19018 / LMG 30748 / EbN1) (Azoarcus sp. (strain EbN1)).